The following is a 908-amino-acid chain: Protein translocase subunit SecA (908 aa).

Residues Gln-87, 105–109 (GEGKT), and Asp-512 each bind ATP. The disordered stretch occupies residues 882-908 (DGEKVGRNDPCPCGSGKKYKQCHGKLT). The Zn(2+) site is built by Cys-892, Cys-894, Cys-903, and His-904. Basic residues predominate over residues 898–908 (KKYKQCHGKLT).

It belongs to the SecA family. Monomer and homodimer. Part of the essential Sec protein translocation apparatus which comprises SecA, SecYEG and auxiliary proteins SecDF-YajC and YidC. Requires Zn(2+) as cofactor.

The protein localises to the cell inner membrane. It localises to the cytoplasm. The catalysed reaction is ATP + H2O + cellular proteinSide 1 = ADP + phosphate + cellular proteinSide 2.. Its function is as follows. Part of the Sec protein translocase complex. Interacts with the SecYEG preprotein conducting channel. Has a central role in coupling the hydrolysis of ATP to the transfer of proteins into and across the cell membrane, serving both as a receptor for the preprotein-SecB complex and as an ATP-driven molecular motor driving the stepwise translocation of polypeptide chains across the membrane. This Shewanella amazonensis (strain ATCC BAA-1098 / SB2B) protein is Protein translocase subunit SecA.